A 90-amino-acid polypeptide reads, in one-letter code: Small ribosomal subunit protein bS20 (90 aa).

It belongs to the bacterial ribosomal protein bS20 family.

In terms of biological role, binds directly to 16S ribosomal RNA. This is Small ribosomal subunit protein bS20 from Francisella tularensis subsp. tularensis (strain FSC 198).